The sequence spans 124 residues: Small ribosomal subunit protein eS6 (124 aa).

It belongs to the eukaryotic ribosomal protein eS6 family.

This Methanococcus maripaludis (strain C6 / ATCC BAA-1332) protein is Small ribosomal subunit protein eS6.